The following is a 425-amino-acid chain: Serine--tRNA ligase (425 aa).

Residue 233–235 (TAE) coordinates L-serine. Position 264–266 (264–266 (RRE)) interacts with ATP. E287 contributes to the L-serine binding site. 351–354 (EISS) lines the ATP pocket. S385 lines the L-serine pocket.

This sequence belongs to the class-II aminoacyl-tRNA synthetase family. Type-1 seryl-tRNA synthetase subfamily. In terms of assembly, homodimer. The tRNA molecule binds across the dimer.

Its subcellular location is the cytoplasm. It catalyses the reaction tRNA(Ser) + L-serine + ATP = L-seryl-tRNA(Ser) + AMP + diphosphate + H(+). It carries out the reaction tRNA(Sec) + L-serine + ATP = L-seryl-tRNA(Sec) + AMP + diphosphate + H(+). It functions in the pathway aminoacyl-tRNA biosynthesis; selenocysteinyl-tRNA(Sec) biosynthesis; L-seryl-tRNA(Sec) from L-serine and tRNA(Sec): step 1/1. Its function is as follows. Catalyzes the attachment of serine to tRNA(Ser). Is also able to aminoacylate tRNA(Sec) with serine, to form the misacylated tRNA L-seryl-tRNA(Sec), which will be further converted into selenocysteinyl-tRNA(Sec). The sequence is that of Serine--tRNA ligase from Synechococcus sp. (strain WH7803).